We begin with the raw amino-acid sequence, 184 residues long: ATP synthase subunit delta (184 aa).

The protein belongs to the ATPase delta chain family. F-type ATPases have 2 components, F(1) - the catalytic core - and F(0) - the membrane proton channel. F(1) has five subunits: alpha(3), beta(3), gamma(1), delta(1), epsilon(1). F(0) has three main subunits: a(1), b(2) and c(10-14). The alpha and beta chains form an alternating ring which encloses part of the gamma chain. F(1) is attached to F(0) by a central stalk formed by the gamma and epsilon chains, while a peripheral stalk is formed by the delta and b chains.

The protein localises to the cell membrane. In terms of biological role, f(1)F(0) ATP synthase produces ATP from ADP in the presence of a proton or sodium gradient. F-type ATPases consist of two structural domains, F(1) containing the extramembraneous catalytic core and F(0) containing the membrane proton channel, linked together by a central stalk and a peripheral stalk. During catalysis, ATP synthesis in the catalytic domain of F(1) is coupled via a rotary mechanism of the central stalk subunits to proton translocation. Functionally, this protein is part of the stalk that links CF(0) to CF(1). It either transmits conformational changes from CF(0) to CF(1) or is implicated in proton conduction. The protein is ATP synthase subunit delta of Wolbachia pipientis subsp. Culex pipiens (strain wPip).